The sequence spans 150 residues: Large ribosomal subunit protein bL9 (150 aa).

This sequence belongs to the bacterial ribosomal protein bL9 family.

Binds to the 23S rRNA. This Staphylococcus aureus (strain NCTC 8325 / PS 47) protein is Large ribosomal subunit protein bL9.